We begin with the raw amino-acid sequence, 325 residues long: Lipoyl synthase (325 aa).

Residues Cys72, Cys77, Cys83, Cys98, Cys102, Cys105, and Ser312 each contribute to the [4Fe-4S] cluster site. Residues 84–301 (FAGGTATFMI…AEEGERMGFK (218 aa)) enclose the Radical SAM core domain.

The protein belongs to the radical SAM superfamily. Lipoyl synthase family. It depends on [4Fe-4S] cluster as a cofactor.

It localises to the cytoplasm. It carries out the reaction [[Fe-S] cluster scaffold protein carrying a second [4Fe-4S](2+) cluster] + N(6)-octanoyl-L-lysyl-[protein] + 2 oxidized [2Fe-2S]-[ferredoxin] + 2 S-adenosyl-L-methionine + 4 H(+) = [[Fe-S] cluster scaffold protein] + N(6)-[(R)-dihydrolipoyl]-L-lysyl-[protein] + 4 Fe(3+) + 2 hydrogen sulfide + 2 5'-deoxyadenosine + 2 L-methionine + 2 reduced [2Fe-2S]-[ferredoxin]. It functions in the pathway protein modification; protein lipoylation via endogenous pathway; protein N(6)-(lipoyl)lysine from octanoyl-[acyl-carrier-protein]: step 2/2. Catalyzes the radical-mediated insertion of two sulfur atoms into the C-6 and C-8 positions of the octanoyl moiety bound to the lipoyl domains of lipoate-dependent enzymes, thereby converting the octanoylated domains into lipoylated derivatives. The chain is Lipoyl synthase from Azotobacter vinelandii (strain DJ / ATCC BAA-1303).